The sequence spans 376 residues: Alcohol dehydrogenase class-3 (376 aa).

7 residues coordinate Zn(2+): Cys-47, His-69, Cys-99, Cys-102, Cys-105, Cys-113, and Cys-176.

It belongs to the zinc-containing alcohol dehydrogenase family. Class-III subfamily. As to quaternary structure, homodimer. The cofactor is Zn(2+). In terms of tissue distribution, expressed in the skeletal muscle, heart, gill filaments and liver, with highest levels in the kidney.

The protein resides in the cytoplasm. The enzyme catalyses a primary alcohol + NAD(+) = an aldehyde + NADH + H(+). The catalysed reaction is a secondary alcohol + NAD(+) = a ketone + NADH + H(+). It catalyses the reaction S-(hydroxymethyl)glutathione + NADP(+) = S-formylglutathione + NADPH + H(+). It carries out the reaction S-(hydroxymethyl)glutathione + NAD(+) = S-formylglutathione + NADH + H(+). The enzyme catalyses S-nitrosoglutathione + NADH + H(+) = S-(hydroxysulfenamide)glutathione + NAD(+). Its function is as follows. Class-III ADH is remarkably ineffective in oxidizing ethanol, but it readily catalyzes the oxidation of long-chain primary alcohols and the oxidation of S-(hydroxymethyl) glutathione. Also acts as a S-nitroso-glutathione reductase by catalyzing the NADH-dependent reduction of S-nitrosoglutathione, thereby regulating protein S-nitrosylation. This chain is Alcohol dehydrogenase class-3, found in Sparus aurata (Gilthead sea bream).